A 257-amino-acid polypeptide reads, in one-letter code: Myosin-8 (257 aa).

Residues 1-257 (RAALQAEIEE…REVHTKISAE (257 aa)) are a coiled coil. Residues Ser-33, Ser-45, and Ser-58 each carry the phosphoserine modification.

Muscle myosin is a hexameric protein that consists of 2 heavy chain subunits (MHC), 2 alkali light chain subunits (MLC) and 2 regulatory light chain subunits (MLC-2).

Its subcellular location is the cytoplasm. It localises to the myofibril. In terms of biological role, muscle contraction. The chain is Myosin-8 (Myh8) from Rattus norvegicus (Rat).